A 148-amino-acid polypeptide reads, in one-letter code: Snaclec stejaggregin-A subunit beta-2 (148 aa).

The signal sequence occupies residues 1–23; it reads MGQFIFVSFGLLVVLLSLSGAGA. A disulfide bridge links Cys-27 with Cys-38. Residues 34 to 145 form the C-type lectin domain; it reads YDLYCYKVFK…CSRTHYVVCK (112 aa). Residues Asn-47 and Asn-78 are each glycosylated (N-linked (GlcNAc...) asparagine). Disulfide bonds link Cys-55/Cys-144 and Cys-121/Cys-136.

Belongs to the snaclec family. In terms of assembly, heteromultimer; disulfide-linked. As to expression, expressed by the venom gland.

It localises to the secreted. Its function is as follows. Interferes with one step of hemostasis (modulation of platelet aggregation, or coagulation cascade, for example). The protein is Snaclec stejaggregin-A subunit beta-2 of Trimeresurus stejnegeri (Chinese green tree viper).